The primary structure comprises 401 residues: Phosphoglycerate kinase (401 aa).

Substrate is bound by residues 24–26 (DFN), Arg40, 63–66 (HFGR), Arg122, and Arg155. ATP contacts are provided by residues Lys206, Gly297, Glu328, and 357 to 360 (GGDS).

It belongs to the phosphoglycerate kinase family. In terms of assembly, monomer.

Its subcellular location is the cytoplasm. The enzyme catalyses (2R)-3-phosphoglycerate + ATP = (2R)-3-phospho-glyceroyl phosphate + ADP. Its pathway is carbohydrate degradation; glycolysis; pyruvate from D-glyceraldehyde 3-phosphate: step 2/5. This chain is Phosphoglycerate kinase, found in Prochlorococcus marinus (strain NATL2A).